The chain runs to 163 residues: NADH-quinone oxidoreductase subunit I (163 aa).

4Fe-4S ferredoxin-type domains follow at residues 53 to 83 and 94 to 123; these read LRRY…IEAG and VRYD…EGPN. Positions 63, 66, 69, 73, 103, 106, 109, and 113 each coordinate [4Fe-4S] cluster.

The protein belongs to the complex I 23 kDa subunit family. In terms of assembly, NDH-1 is composed of 14 different subunits. Subunits NuoA, H, J, K, L, M, N constitute the membrane sector of the complex. [4Fe-4S] cluster serves as cofactor.

The protein resides in the cell inner membrane. It carries out the reaction a quinone + NADH + 5 H(+)(in) = a quinol + NAD(+) + 4 H(+)(out). Its function is as follows. NDH-1 shuttles electrons from NADH, via FMN and iron-sulfur (Fe-S) centers, to quinones in the respiratory chain. The immediate electron acceptor for the enzyme in this species is believed to be ubiquinone. Couples the redox reaction to proton translocation (for every two electrons transferred, four hydrogen ions are translocated across the cytoplasmic membrane), and thus conserves the redox energy in a proton gradient. The sequence is that of NADH-quinone oxidoreductase subunit I from Bartonella tribocorum (strain CIP 105476 / IBS 506).